The sequence spans 213 residues: Probable nicotinate-nucleotide adenylyltransferase (213 aa).

It belongs to the NadD family.

The catalysed reaction is nicotinate beta-D-ribonucleotide + ATP + H(+) = deamido-NAD(+) + diphosphate. It functions in the pathway cofactor biosynthesis; NAD(+) biosynthesis; deamido-NAD(+) from nicotinate D-ribonucleotide: step 1/1. Its function is as follows. Catalyzes the reversible adenylation of nicotinate mononucleotide (NaMN) to nicotinic acid adenine dinucleotide (NaAD). This Ruegeria pomeroyi (strain ATCC 700808 / DSM 15171 / DSS-3) (Silicibacter pomeroyi) protein is Probable nicotinate-nucleotide adenylyltransferase.